An 882-amino-acid polypeptide reads, in one-letter code: Ubiquitin carboxyl-terminal hydrolase 4 (882 aa).

A Rhodanese domain is found at 182–308 (YDSSLLLIDV…WVSKKGACET (127 aa)). The segment covering 382-399 (KAKSSSTSSVTSSSPAPS) has biased composition (low complexity). The interval 382 to 411 (KAKSSSTSSVTSSSPAPSQLVRPQTSSMPP) is disordered. The span at 402 to 411 (VRPQTSSMPP) shows a compositional bias: polar residues. The USP domain maps to 519–879 (VGLENMGNSC…NAYVLFYHRV (361 aa)). The active-site Nucleophile is the cysteine 528. Histidine 836 serves as the catalytic Proton acceptor.

The protein belongs to the peptidase C19 family.

It localises to the cytoplasm. The protein localises to the late endosome membrane. It carries out the reaction Thiol-dependent hydrolysis of ester, thioester, amide, peptide and isopeptide bonds formed by the C-terminal Gly of ubiquitin (a 76-residue protein attached to proteins as an intracellular targeting signal).. RFU1 is an inhibitor of deubiquitination activity. In terms of biological role, ubiquitin thioesterase that acts at the late endosome/prevacuolar compartment to recover ubiquitin from ubiquitinated membrane proteins en route to the vacuole. Also removes ubiquitin from soluble proteins targeted to proteasomes. Is essential to maintain a normal level of free ubiquitin. Required for promoting coordination of DNA replication and avoids DNA overreplication. The protein is Ubiquitin carboxyl-terminal hydrolase 4 (DOA4) of Vanderwaltozyma polyspora (strain ATCC 22028 / DSM 70294 / BCRC 21397 / CBS 2163 / NBRC 10782 / NRRL Y-8283 / UCD 57-17) (Kluyveromyces polysporus).